We begin with the raw amino-acid sequence, 439 residues long: Serine--tRNA ligase (439 aa).

Thr-247–Glu-249 contacts L-serine. Arg-278–Glu-280 contacts ATP. Residue Glu-301 participates in L-serine binding. ATP is bound at residue Glu-365 to Ser-368. Ser-400 contributes to the L-serine binding site.

This sequence belongs to the class-II aminoacyl-tRNA synthetase family. Type-1 seryl-tRNA synthetase subfamily. Homodimer. The tRNA molecule binds across the dimer.

The protein localises to the cytoplasm. It carries out the reaction tRNA(Ser) + L-serine + ATP = L-seryl-tRNA(Ser) + AMP + diphosphate + H(+). The catalysed reaction is tRNA(Sec) + L-serine + ATP = L-seryl-tRNA(Sec) + AMP + diphosphate + H(+). The protein operates within aminoacyl-tRNA biosynthesis; selenocysteinyl-tRNA(Sec) biosynthesis; L-seryl-tRNA(Sec) from L-serine and tRNA(Sec): step 1/1. Functionally, catalyzes the attachment of serine to tRNA(Ser). Is also able to aminoacylate tRNA(Sec) with serine, to form the misacylated tRNA L-seryl-tRNA(Sec), which will be further converted into selenocysteinyl-tRNA(Sec). This is Serine--tRNA ligase from Paracidovorax citrulli (strain AAC00-1) (Acidovorax citrulli).